We begin with the raw amino-acid sequence, 267 residues long: Glucosamine-6-phosphate deaminase (267 aa).

Residue Asp72 is the Proton acceptor; for enolization step of the active site. Asp141 functions as the For ring-opening step in the catalytic mechanism. His143 functions as the Proton acceptor; for ring-opening step in the catalytic mechanism. Glu148 serves as the catalytic For ring-opening step.

Belongs to the glucosamine/galactosamine-6-phosphate isomerase family. NagB subfamily. Homohexamer.

The catalysed reaction is alpha-D-glucosamine 6-phosphate + H2O = beta-D-fructose 6-phosphate + NH4(+). The protein operates within amino-sugar metabolism; N-acetylneuraminate degradation; D-fructose 6-phosphate from N-acetylneuraminate: step 5/5. Allosterically activated by N-acetylglucosamine 6-phosphate (GlcNAc6P). Functionally, catalyzes the reversible isomerization-deamination of glucosamine 6-phosphate (GlcN6P) to form fructose 6-phosphate (Fru6P) and ammonium ion. This Mannheimia succiniciproducens (strain KCTC 0769BP / MBEL55E) protein is Glucosamine-6-phosphate deaminase.